The primary structure comprises 414 residues: Isocitrate dehydrogenase [NADP] cytoplasmic (414 aa).

Residue Ser-2 is modified to N-acetylserine. A Phosphotyrosine modification is found at Tyr-42. 75–77 (TIT) contributes to the NADP(+) binding site. Residue Thr-77 participates in substrate binding. An N6-acetyllysine modification is found at Lys-81. Residue Arg-82 participates in NADP(+) binding. Substrate contacts are provided by residues 94–100 (SPNGTIR) and Arg-109. N6-succinyllysine is present on Lys-126. Positions 132 and 212 each coordinate substrate. Lys-224 and Lys-233 each carry N6-acetyllysine. Asp-252 contacts Mn(2+). Residue Lys-260 participates in NADP(+) binding. Positions 275 and 279 each coordinate Mn(2+). NADP(+) is bound at residue 310–315 (GTVTRH). Residue Lys-321 is modified to N6-acetyllysine. Asn-328 is an NADP(+) binding site. Ser-389 is subject to Phosphoserine. N6-succinyllysine is present on Lys-400.

The protein belongs to the isocitrate and isopropylmalate dehydrogenases family. As to quaternary structure, homodimer. Requires Mg(2+) as cofactor. It depends on Mn(2+) as a cofactor. Acetylation at Lys-374 dramatically reduces catalytic activity. In terms of tissue distribution, expressed preferentially in corneal epithelium. Constitute approximately 13% of the total soluble bovine corneal epithelial proteins.

It is found in the cytoplasm. It localises to the cytosol. The enzyme catalyses D-threo-isocitrate + NADP(+) = 2-oxoglutarate + CO2 + NADPH. In terms of biological role, catalyzes the NADP(+)-dependent oxidative decarboxylation of isocitrate (D-threo-isocitrate) to 2-ketoglutarate (2-oxoglutarate), which is required by other enzymes such as the phytanoyl-CoA dioxygenase. Plays a critical role in the generation of NADPH, an important cofactor in many biosynthesis pathways. May act as a corneal epithelial crystallin and may be involved in maintaining corneal epithelial transparency. The chain is Isocitrate dehydrogenase [NADP] cytoplasmic (IDH1) from Bos taurus (Bovine).